Reading from the N-terminus, the 361-residue chain is 3-dehydroquinate synthase (361 aa).

NAD(+) contacts are provided by residues 106 to 110 (GVVGD), 130 to 131 (TT), K143, and K152. E185, H248, and H265 together coordinate Zn(2+).

This sequence belongs to the sugar phosphate cyclases superfamily. Dehydroquinate synthase family. Requires NAD(+) as cofactor. Co(2+) is required as a cofactor. The cofactor is Zn(2+).

Its subcellular location is the cytoplasm. The enzyme catalyses 7-phospho-2-dehydro-3-deoxy-D-arabino-heptonate = 3-dehydroquinate + phosphate. The protein operates within metabolic intermediate biosynthesis; chorismate biosynthesis; chorismate from D-erythrose 4-phosphate and phosphoenolpyruvate: step 2/7. In terms of biological role, catalyzes the conversion of 3-deoxy-D-arabino-heptulosonate 7-phosphate (DAHP) to dehydroquinate (DHQ). The polypeptide is 3-dehydroquinate synthase (Leptospira interrogans serogroup Icterohaemorrhagiae serovar copenhageni (strain Fiocruz L1-130)).